The sequence spans 341 residues: Small ribosomal subunit protein uS3 (341 aa).

A KH type-2 domain is found at 38 to 106; that stretch reads IRRMMTRGME…QVQLNILEVK (69 aa). Disordered stretches follow at residues 224 to 246 and 274 to 341; these read RAVRGRSARREQPAAESPALETA and PAGQ…TKEG. 2 stretches are compositionally biased toward low complexity: residues 285 to 303 and 311 to 333; these read AEQPVVTAEPAAAAAVTGE and AAPAEPTTSAAAEEAPGGADAPS.

It belongs to the universal ribosomal protein uS3 family. Part of the 30S ribosomal subunit. Forms a tight complex with proteins S10 and S14.

In terms of biological role, binds the lower part of the 30S subunit head. Binds mRNA in the 70S ribosome, positioning it for translation. The sequence is that of Small ribosomal subunit protein uS3 from Acidothermus cellulolyticus (strain ATCC 43068 / DSM 8971 / 11B).